A 159-amino-acid polypeptide reads, in one-letter code: Small ribosomal subunit protein uS7c (159 aa).

The protein belongs to the universal ribosomal protein uS7 family. As to quaternary structure, part of the 30S ribosomal subunit.

It is found in the plastid. Its subcellular location is the chloroplast. Its function is as follows. One of the primary rRNA binding proteins, it binds directly to 16S rRNA where it nucleates assembly of the head domain of the 30S subunit. This is Small ribosomal subunit protein uS7c (rps7) from Bigelowiella natans (Pedinomonas minutissima).